The sequence spans 360 residues: Arginase, non-hepatic 2 (360 aa).

The Mn(2+) site is built by His-122, Asp-145, His-147, and Asp-149. Substrate-binding positions include 147–151, 158–160, and Asp-204; these read HADIN and SGN. Residues Asp-253 and Asp-255 each contribute to the Mn(2+) site. Residues Thr-267 and Glu-298 each contribute to the substrate site.

It belongs to the arginase family. Homotrimer. It depends on Mn(2+) as a cofactor. In terms of tissue distribution, expressed at differing tadpole stages in tail, intestine, hindlimb and trunk region. Strongest in tadpole tail.

The enzyme catalyses L-arginine + H2O = urea + L-ornithine. The protein operates within nitrogen metabolism; urea cycle; L-ornithine and urea from L-arginine: step 1/1. Functionally, as well as its role in the urea cycle, may be involved in tissue remodeling. This chain is Arginase, non-hepatic 2 (arg2-b), found in Xenopus laevis (African clawed frog).